Here is a 179-residue protein sequence, read N- to C-terminus: Ribosome maturation factor RimM (179 aa).

Residues 102–179 enclose the PRC barrel domain; the sequence is DGEYYWYQLE…EMKVDWDADF (78 aa).

Belongs to the RimM family. As to quaternary structure, binds ribosomal protein uS19.

It localises to the cytoplasm. An accessory protein needed during the final step in the assembly of 30S ribosomal subunit, possibly for assembly of the head region. Essential for efficient processing of 16S rRNA. May be needed both before and after RbfA during the maturation of 16S rRNA. It has affinity for free ribosomal 30S subunits but not for 70S ribosomes. This Pseudomonas syringae pv. syringae (strain B728a) protein is Ribosome maturation factor RimM.